The sequence spans 492 residues: Cysteine--tRNA ligase (492 aa).

Cys27 lines the Zn(2+) pocket. The 'HIGH' region motif lies at 29 to 39 (VTVYDLCHLGH). 3 residues coordinate Zn(2+): Cys211, His236, and Glu240. A 'KMSKS' region motif is present at residues 268 to 272 (KMSKS). Lys271 is an ATP binding site.

Belongs to the class-I aminoacyl-tRNA synthetase family. As to quaternary structure, monomer. Requires Zn(2+) as cofactor.

The protein localises to the cytoplasm. It carries out the reaction tRNA(Cys) + L-cysteine + ATP = L-cysteinyl-tRNA(Cys) + AMP + diphosphate. The protein is Cysteine--tRNA ligase of Prochlorococcus marinus (strain MIT 9515).